We begin with the raw amino-acid sequence, 1404 residues long: DNA-directed RNA polymerase subunit beta' (1404 aa).

Residues Cys-70, Cys-72, Cys-85, and Cys-88 each contribute to the Zn(2+) site. 3 residues coordinate Mg(2+): Asp-460, Asp-462, and Asp-464. Residues Cys-814, Cys-888, Cys-895, and Cys-898 each coordinate Zn(2+).

This sequence belongs to the RNA polymerase beta' chain family. In terms of assembly, the RNAP catalytic core consists of 2 alpha, 1 beta, 1 beta' and 1 omega subunit. When a sigma factor is associated with the core the holoenzyme is formed, which can initiate transcription. Mg(2+) is required as a cofactor. Zn(2+) serves as cofactor.

The catalysed reaction is RNA(n) + a ribonucleoside 5'-triphosphate = RNA(n+1) + diphosphate. In terms of biological role, DNA-dependent RNA polymerase catalyzes the transcription of DNA into RNA using the four ribonucleoside triphosphates as substrates. The protein is DNA-directed RNA polymerase subunit beta' of Shewanella pealeana (strain ATCC 700345 / ANG-SQ1).